The primary structure comprises 245 residues: tRNA (guanine-N(1)-)-methyltransferase (245 aa).

Residues glycine 114 and leucine 133 to isoleucine 138 contribute to the S-adenosyl-L-methionine site.

It belongs to the RNA methyltransferase TrmD family. As to quaternary structure, homodimer.

It is found in the cytoplasm. The catalysed reaction is guanosine(37) in tRNA + S-adenosyl-L-methionine = N(1)-methylguanosine(37) in tRNA + S-adenosyl-L-homocysteine + H(+). In terms of biological role, specifically methylates guanosine-37 in various tRNAs. In Pediococcus pentosaceus (strain ATCC 25745 / CCUG 21536 / LMG 10740 / 183-1w), this protein is tRNA (guanine-N(1)-)-methyltransferase.